Reading from the N-terminus, the 268-residue chain is UPF0328 protein ECU03_0040 (268 aa).

It belongs to the UPF0328 family.

This chain is UPF0328 protein ECU03_0040, found in Encephalitozoon cuniculi (strain GB-M1) (Microsporidian parasite).